The sequence spans 405 residues: Enoyl-[acyl-carrier-protein] reductase [NADH] (405 aa).

NAD(+) contacts are provided by residues 48–53, 74–75, 111–112, and 140–141; these read GASSGY, FE, DA, and LA. Position 226 (Tyr226) interacts with substrate. Tyr236 serves as the catalytic Proton donor. NAD(+) contacts are provided by residues Lys245 and 274 to 276; that span reads VVT.

This sequence belongs to the TER reductase family. In terms of assembly, monomer.

It carries out the reaction a 2,3-saturated acyl-[ACP] + NAD(+) = a (2E)-enoyl-[ACP] + NADH + H(+). It functions in the pathway lipid metabolism; fatty acid biosynthesis. Its function is as follows. Involved in the final reduction of the elongation cycle of fatty acid synthesis (FAS II). Catalyzes the reduction of a carbon-carbon double bond in an enoyl moiety that is covalently linked to an acyl carrier protein (ACP). The sequence is that of Enoyl-[acyl-carrier-protein] reductase [NADH] from Xanthomonas oryzae pv. oryzae (strain PXO99A).